We begin with the raw amino-acid sequence, 201 residues long: Recombination protein RecR (201 aa).

The C4-type zinc finger occupies 57–72; sequence CADCRTFTEQEKCNIC. The Toprim domain occupies 81 to 176; that stretch reads GQICVVESPA…DASRIAHGVP (96 aa).

It belongs to the RecR family.

Its function is as follows. May play a role in DNA repair. It seems to be involved in an RecBC-independent recombinational process of DNA repair. It may act with RecF and RecO. The chain is Recombination protein RecR from Cronobacter sakazakii (strain ATCC BAA-894) (Enterobacter sakazakii).